The following is a 627-amino-acid chain: Neutral endopeptidase (627 aa).

Residues 1–627 enclose the Peptidase M13 domain; the sequence is MTRIQDDLFA…RAPENRLKIW (627 aa). Residue histidine 475 coordinates Zn(2+). Glutamate 476 is an active-site residue. Histidine 479 and glutamate 535 together coordinate Zn(2+). The active-site Proton donor is the aspartate 539.

This sequence belongs to the peptidase M13 family. Monomer. Requires Zn(2+) as cofactor.

It is found in the cytoplasm. Its function is as follows. Endopeptidase with broad substrate specificity for several oligopeptides. This chain is Neutral endopeptidase (pepO), found in Lactococcus lactis subsp. cremoris (Streptococcus cremoris).